The primary structure comprises 100 residues: MHLTPRELDKLMIYCLAEVAHKRKAQGIKLNHPESVAVISAAALDGARAGKTVEDVMKDAATVLTRDDVMEGVPEMIPLVQVEAVFTDGSRLVTVHSPIQ.

This sequence belongs to the urease gamma subunit family. In terms of assembly, heterotrimer of UreA (gamma), UreB (beta) and UreC (alpha) subunits. Three heterotrimers associate to form the active enzyme.

It is found in the cytoplasm. It catalyses the reaction urea + 2 H2O + H(+) = hydrogencarbonate + 2 NH4(+). It participates in nitrogen metabolism; urea degradation; CO(2) and NH(3) from urea (urease route): step 1/1. This chain is Urease subunit gamma, found in Laribacter hongkongensis (strain HLHK9).